The chain runs to 90 residues: Probable Fe(2+)-trafficking protein (90 aa).

This sequence belongs to the Fe(2+)-trafficking protein family.

Functionally, could be a mediator in iron transactions between iron acquisition and iron-requiring processes, such as synthesis and/or repair of Fe-S clusters in biosynthetic enzymes. This is Probable Fe(2+)-trafficking protein from Cupriavidus necator (strain ATCC 17699 / DSM 428 / KCTC 22496 / NCIMB 10442 / H16 / Stanier 337) (Ralstonia eutropha).